The following is a 267-amino-acid chain: Putative B3 domain-containing protein LOC_Os07g12820 (267 aa).

The TF-B3 DNA-binding region spans 4-99 (PTFSMVKIKT…RLNVIIFNKE (96 aa)).

It localises to the nucleus. In Oryza sativa subsp. japonica (Rice), this protein is Putative B3 domain-containing protein LOC_Os07g12820.